The sequence spans 221 residues: Extracellular superoxide dismutase [Cu-Zn] (221 aa).

An N-terminal signal peptide occupies residues 1–19; that stretch reads MKTRVVLILALSVCIEAAS. N-linked (GlcNAc...) asparagine glycosylation occurs at N56. H70, H72, and H87 together coordinate Cu cation. The cysteines at positions 81 and 170 are disulfide-linked. H87, H95, H104, and D107 together coordinate Zn(2+). H144 is a Cu cation binding site.

The protein belongs to the Cu-Zn superoxide dismutase family. It depends on Cu cation as a cofactor. Zn(2+) serves as cofactor. In terms of tissue distribution, isoform 2 is preferentially expressed in eggs.

Its subcellular location is the secreted. It localises to the extracellular space. The protein resides in the membrane. The catalysed reaction is 2 superoxide + 2 H(+) = H2O2 + O2. Functionally, protects cells against oxidative stress by converting superoxide radicals to hydrogen peroxide. Oxidative stress is involved in various biological dysfunctions and senescence. This chain is Extracellular superoxide dismutase [Cu-Zn] (sod-4), found in Caenorhabditis elegans.